The primary structure comprises 643 residues: tRNA 5-methylaminomethyl-2-thiouridine biosynthesis bifunctional protein MnmC (643 aa).

The tRNA (mnm(5)s(2)U34)-methyltransferase stretch occupies residues 1 to 223; the sequence is MPDRLVSATL…VDDRLVGDYA (223 aa). Residues 247 to 643 form an FAD-dependent cmnm(5)s(2)U34 oxidoreductase region; it reads IGAGLAGCAV…LRARRVGSAG (397 aa).

It in the N-terminal section; belongs to the methyltransferase superfamily. tRNA (mnm(5)s(2)U34)-methyltransferase family. This sequence in the C-terminal section; belongs to the DAO family. It depends on FAD as a cofactor.

Its subcellular location is the cytoplasm. The catalysed reaction is 5-aminomethyl-2-thiouridine(34) in tRNA + S-adenosyl-L-methionine = 5-methylaminomethyl-2-thiouridine(34) in tRNA + S-adenosyl-L-homocysteine + H(+). Functionally, catalyzes the last two steps in the biosynthesis of 5-methylaminomethyl-2-thiouridine (mnm(5)s(2)U) at the wobble position (U34) in tRNA. Catalyzes the FAD-dependent demodification of cmnm(5)s(2)U34 to nm(5)s(2)U34, followed by the transfer of a methyl group from S-adenosyl-L-methionine to nm(5)s(2)U34, to form mnm(5)s(2)U34. The sequence is that of tRNA 5-methylaminomethyl-2-thiouridine biosynthesis bifunctional protein MnmC from Burkholderia orbicola (strain MC0-3).